The following is a 125-amino-acid chain: Glycine cleavage system H protein (125 aa).

Residues 22–104 (SYIIGITDFA…YDTGWILKLT (83 aa)) enclose the Lipoyl-binding domain. Lysine 63 carries the N6-lipoyllysine modification.

Belongs to the GcvH family. The glycine cleavage system is composed of four proteins: P, T, L and H. (R)-lipoate serves as cofactor.

In terms of biological role, the glycine cleavage system catalyzes the degradation of glycine. The H protein shuttles the methylamine group of glycine from the P protein to the T protein. Functionally, is also involved in protein lipoylation via its role as an octanoyl/lipoyl carrier protein intermediate. This is Glycine cleavage system H protein from Listeria innocua serovar 6a (strain ATCC BAA-680 / CLIP 11262).